We begin with the raw amino-acid sequence, 146 residues long: Pre-mRNA-splicing factor cwf14 (146 aa).

The protein belongs to the BUD31 (G10) family. As to quaternary structure, belongs to the 40S cdc5-associated complex (or cwf complex), a spliceosome sub-complex reminiscent of a late-stage spliceosome composed of the U2, U5 and U6 snRNAs and at least brr2, cdc5, cwf2/prp3, cwf3/syf1, cwf4/syf3, cwf5/ecm2, spp42/cwf6, cwf7/spf27, cwf8, cwf9, cwf10, cwf11, cwf12, prp45/cwf13, cwf14, cwf15, cwf16, cwf17, cwf18, cwf19, cwf20, cwf21, cwf22, cwf23, cwf24, cwf25, cwf26, cyp7/cwf27, cwf28, cwf29/ist3, lea1, msl1, prp5/cwf1, prp10, prp12/sap130, prp17, prp22, sap61, sap62, sap114, sap145, slu7, smb1, smd1, smd3, smf1, smg1 and syf2.

Its subcellular location is the nucleus. In terms of biological role, involved in mRNA splicing where it associates with cdc5 and the other cwf proteins as part of the spliceosome. This is Pre-mRNA-splicing factor cwf14 (cwf14) from Schizosaccharomyces pombe (strain 972 / ATCC 24843) (Fission yeast).